Here is a 241-residue protein sequence, read N- to C-terminus: Folate receptor alpha (241 aa).

The first 19 residues, 1–19, serve as a signal peptide directing secretion; sequence MAWQMTQLLLLALVAAAWG. Intrachain disulfides connect C36/C64, C56/C104, C65/C108, C88/C174, C95/C145, C134/C208, C138/C188, and C151/C168. A glycan (N-linked (GlcNAc...) asparagine) is linked at N68. Residues D102, Y106, 123–127, 156–161, and S195 each bind folate; these read WRKER and HKGWNW. N160 carries an N-linked (GlcNAc...) asparagine glycan. S234 carries the GPI-anchor amidated serine lipid modification. Positions 235–241 are cleaved as a propeptide — removed in mature form; that stretch reads GSTPQGI.

The protein belongs to the folate receptor family. The secreted form is derived from the membrane-bound form either by cleavage of the GPI anchor, or/and by proteolysis catalyzed by a metalloprotease. As to expression, detected in milk (at protein level).

The protein localises to the cell membrane. It is found in the apical cell membrane. It localises to the basolateral cell membrane. Its subcellular location is the secreted. The protein resides in the cytoplasmic vesicle. The protein localises to the clathrin-coated vesicle. It is found in the endosome. Functionally, binds to folate and reduced folic acid derivatives and mediates delivery of 5-methyltetrahydrofolate and folate analogs into the interior of cells. Has high affinity for folate and folic acid analogs at neutral pH. Exposure to slightly acidic pH after receptor endocytosis triggers a conformation change that strongly reduces its affinity for folates and mediates their release. Required for normal embryonic development and normal cell proliferation. The chain is Folate receptor alpha (FOLR1) from Bos taurus (Bovine).